The sequence spans 490 residues: Betaine aldehyde dehydrogenase (490 aa).

Asp-93 serves as a coordination point for K(+). 150-152 (GAW) contacts NAD(+). Lys-162 (charge relay system) is an active-site residue. NAD(+) is bound at residue 176–179 (KPSE). Position 180 (Val-180) interacts with K(+). 230–233 (GIAS) provides a ligand contact to NAD(+). K(+) is bound at residue Leu-246. Glu-252 functions as the Proton acceptor in the catalytic mechanism. Residues Gly-254, Cys-286, and Glu-387 each contribute to the NAD(+) site. The active-site Nucleophile is Cys-286. Cys-286 bears the Cysteine sulfenic acid (-SOH) mark. Positions 457 and 460 each coordinate K(+). The Charge relay system role is filled by Glu-464.

Belongs to the aldehyde dehydrogenase family. Dimer of dimers. K(+) serves as cofactor.

It catalyses the reaction betaine aldehyde + NAD(+) + H2O = glycine betaine + NADH + 2 H(+). It functions in the pathway amine and polyamine biosynthesis; betaine biosynthesis via choline pathway; betaine from betaine aldehyde: step 1/1. In terms of biological role, involved in the biosynthesis of the osmoprotectant glycine betaine. Catalyzes the irreversible oxidation of betaine aldehyde to the corresponding acid. The chain is Betaine aldehyde dehydrogenase from Yersinia pseudotuberculosis serotype O:3 (strain YPIII).